We begin with the raw amino-acid sequence, 262 residues long: Nodulation protein J (262 aa).

One can recognise an ABC transmembrane type-2 domain in the interval 33–259; it reads ASILGNLAEP…FLSVGLLQRR (227 aa). 6 helical membrane passes run 35–55, 62–82, 125–145, 147–167, 177–197, and 236–256; these read ILGNLAEPVTSLFGLGFGLGA, GIPYVAFLAAGMVATSAMISA, ALLAGTAMMLVAATMGFASWP, VLFALPVIALTGFAFASLAMI, YFIFYQTLFLTPMLFLSGAVF, and LHISALCIFAVMPFFLSVGLL.

Belongs to the ABC-2 integral membrane protein family. Lipooligosaccharide exporter (TC 3.A.1.102) subfamily. As to quaternary structure, the complex is composed of two ATP-binding proteins (NodI) and two transmembrane proteins (NodJ).

It localises to the cell inner membrane. Functionally, part of the ABC transporter complex NodIJ involved in the export of the nodulation factors (Nod factors), the bacterial signal molecules that induce symbiosis and subsequent nodulation induction. Nod factors are LCO (lipo-chitin oligosaccharide), a modified beta-1,4-linked N-acetylglucosamine oligosaccharide. This subunit encodes the transporter. The sequence is that of Nodulation protein J (nodJ) from Sinorhizobium fredii (strain NBRC 101917 / NGR234).